We begin with the raw amino-acid sequence, 399 residues long: MLFLGAGELGKEVAIELMRLGAWVCAADSYAGAPAQQVAHEYRALDMANAAELQALFDEIKPDIIVPEVEAIATDVLAGTAAAGAQVVPSAEIAAICMDRERLRVLAHEELGLPTTPYRFAGSLEELRAGASEVGYPCVVKPVMSSSGHGQSVVRSADAIDAAWTEAQEGRRAADEGDVSRVIVEALAPLERELTVLTVSSSAGIVTCAPIGQRQESGDYRESWQPATEPDGEAERARDIARTAVEGLVAKAQAAGETGWGVFGVELFVLTDGSILFNEVSPRPHDTGMVTMASQRLSEFALHARAILGLPITPEHVSLTIPAGSVAASHAIVVAGDGEVEFTDVAAALAEPGTDLRIFAKPEVHGHRRMAVALAVGESEADARAKAGLVADALTITVE.

Residues 8–9 (EL) and E68 each bind N(1)-(5-phospho-beta-D-ribosyl)glycinamide. ATP contacts are provided by residues R100, K141, 146–151 (SSGHGQ), 185–188 (EALA), and E193. The region spanning 105–308 (VLAHEELGLP…EFALHARAIL (204 aa)) is the ATP-grasp domain. Mg(2+) contacts are provided by E266 and E279. N(1)-(5-phospho-beta-D-ribosyl)glycinamide-binding positions include D286, K361, and 368–369 (RR).

This sequence belongs to the PurK/PurT family. Homodimer.

The catalysed reaction is N(1)-(5-phospho-beta-D-ribosyl)glycinamide + formate + ATP = N(2)-formyl-N(1)-(5-phospho-beta-D-ribosyl)glycinamide + ADP + phosphate + H(+). It functions in the pathway purine metabolism; IMP biosynthesis via de novo pathway; N(2)-formyl-N(1)-(5-phospho-D-ribosyl)glycinamide from N(1)-(5-phospho-D-ribosyl)glycinamide (formate route): step 1/1. In terms of biological role, involved in the de novo purine biosynthesis. Catalyzes the transfer of formate to 5-phospho-ribosyl-glycinamide (GAR), producing 5-phospho-ribosyl-N-formylglycinamide (FGAR). Formate is provided by PurU via hydrolysis of 10-formyl-tetrahydrofolate. In Bifidobacterium longum (strain NCC 2705), this protein is Formate-dependent phosphoribosylglycinamide formyltransferase.